Reading from the N-terminus, the 343-residue chain is Probable dual-specificity RNA methyltransferase RlmN (343 aa).

Residue Glu-91 is the Proton acceptor of the active site. The Radical SAM core domain maps to 97 to 326 (HPDRITACIS…AEIRREKGTD (230 aa)). A disulfide bridge connects residues Cys-104 and Cys-331. Cys-111, Cys-115, and Cys-118 together coordinate [4Fe-4S] cluster. S-adenosyl-L-methionine is bound by residues 158 to 159 (GE), Ser-190, 213 to 215 (SLH), and Asn-289. The active-site S-methylcysteine intermediate is Cys-331.

This sequence belongs to the radical SAM superfamily. RlmN family. [4Fe-4S] cluster serves as cofactor.

It localises to the cytoplasm. The enzyme catalyses adenosine(2503) in 23S rRNA + 2 reduced [2Fe-2S]-[ferredoxin] + 2 S-adenosyl-L-methionine = 2-methyladenosine(2503) in 23S rRNA + 5'-deoxyadenosine + L-methionine + 2 oxidized [2Fe-2S]-[ferredoxin] + S-adenosyl-L-homocysteine. It catalyses the reaction adenosine(37) in tRNA + 2 reduced [2Fe-2S]-[ferredoxin] + 2 S-adenosyl-L-methionine = 2-methyladenosine(37) in tRNA + 5'-deoxyadenosine + L-methionine + 2 oxidized [2Fe-2S]-[ferredoxin] + S-adenosyl-L-homocysteine. Specifically methylates position 2 of adenine 2503 in 23S rRNA and position 2 of adenine 37 in tRNAs. The sequence is that of Probable dual-specificity RNA methyltransferase RlmN from Thermotoga maritima (strain ATCC 43589 / DSM 3109 / JCM 10099 / NBRC 100826 / MSB8).